Here is a 425-residue protein sequence, read N- to C-terminus: MIVEALNNPFDAEFNKVSSDKSISHRCAIFSLLSDKVSKISNYLEAEDTMNSLKIIEKLGAKVEFKNGVYLITPPKKIVSPNAILECGNSGTAMRIFMGLLAGCDGFFVLSGDKYLNERPMKRVASPLMQIGAKIDGRDCANKAPLAIRGGELNYFAYNSSVASAQVKTALILAGLCSAGCKFKEPELSRDHSERMLLGMGAQISQSGLEIEVKPLKGAYLKPLILDVPNDPSSCFFYAVAAAIIPGSKIIIKNILLNKTRIEAYKVLEKMGAKITYTKTSSTYEDIGDICVQYSELKSVDVNQNISWLIDEAPALAIAFACANGVSTLKNAKELRVKECDRIAITVAALKKCGIEAVELEDGFSIKGGKPNSATIDSHGDHRIAMSFAILGLKCGMNIEKSEFIATSFPKFSYFLRELGARVED.

Lys21, Ser22, and Arg26 together coordinate 3-phosphoshikimate. Residue Lys21 coordinates phosphoenolpyruvate. Positions 91 and 119 each coordinate phosphoenolpyruvate. 3-phosphoshikimate-binding residues include Ser164, Gln166, Asp311, and Lys338. Phosphoenolpyruvate is bound at residue Gln166. Asp311 serves as the catalytic Proton acceptor. Phosphoenolpyruvate contacts are provided by Arg342 and Arg383.

Belongs to the EPSP synthase family. As to quaternary structure, monomer.

The protein resides in the cytoplasm. The enzyme catalyses 3-phosphoshikimate + phosphoenolpyruvate = 5-O-(1-carboxyvinyl)-3-phosphoshikimate + phosphate. Its pathway is metabolic intermediate biosynthesis; chorismate biosynthesis; chorismate from D-erythrose 4-phosphate and phosphoenolpyruvate: step 6/7. Catalyzes the transfer of the enolpyruvyl moiety of phosphoenolpyruvate (PEP) to the 5-hydroxyl of shikimate-3-phosphate (S3P) to produce enolpyruvyl shikimate-3-phosphate and inorganic phosphate. This chain is 3-phosphoshikimate 1-carboxyvinyltransferase, found in Campylobacter fetus subsp. fetus (strain 82-40).